Reading from the N-terminus, the 401-residue chain is MSKLVLILNCGSSSLKFAILDPATGEEKLSGLAEAFFLPEARIKWKLNGEKGNADLGAGAAHTEALNFIASNILTDELKNSIAAIGHRIVHGGEKYTQSVIVTDEVVKGIEDAAQFAPLHNPAHLIGIREAFNAFPHLKDKNVVVFDTAFHQTMSEEAFLYALPYSLYKEHGVRRYGAHGTSHYFISREVAEYVGKPADQVNAIICHLGNGGSVSVVRNGQCIDTSMGLTPLEGLVMGTRCGDIDPAIIFYLYKTLGMSMEQIEETLVKKSGLLGLTEVTSDCRYAEDNYDNASKPEAKRALNVYSYRLAKYIGAYMAVLGDDHLDAIAFTGGIGENSAHVRELALNHLKLFGIQIDNERNLAARFGKDGVITTDDSAFKAIVLPTNEELVIAQDTARLCF.

Asn9 contributes to the Mg(2+) binding site. Lys16 is a binding site for ATP. Arg88 is a substrate binding site. The active-site Proton donor/acceptor is the Asp147. ATP is bound by residues 207 to 211 (HLGNG), 282 to 284 (DCR), and 333 to 337 (GIGEN). Position 388 (Glu388) interacts with Mg(2+).

Belongs to the acetokinase family. As to quaternary structure, homodimer. The cofactor is Mg(2+). It depends on Mn(2+) as a cofactor.

Its subcellular location is the cytoplasm. It catalyses the reaction acetate + ATP = acetyl phosphate + ADP. The protein operates within metabolic intermediate biosynthesis; acetyl-CoA biosynthesis; acetyl-CoA from acetate: step 1/2. Its function is as follows. Catalyzes the formation of acetyl phosphate from acetate and ATP. Can also catalyze the reverse reaction. The polypeptide is Acetate kinase (Haemophilus influenzae (strain PittEE)).